Here is a 195-residue protein sequence, read N- to C-terminus: Glycerol-3-phosphate acyltransferase 2 (195 aa).

6 helical membrane-spanning segments follow: residues 4 to 24 (VVSLAVVFVLSYLLGSLVAGV), 52 to 72 (GAAAAVTLADILKGAAAVGLA), 73 to 93 (LWLAPQALPLATALATFGVVF), 115 to 135 (AMLVVAPWTLLATVTFALALI), 150 to 170 (AIPFATVVAVPVGLLIASRLG), and 171 to 191 (GGAEFLAGSAAMGIRAVHLLA).

This sequence belongs to the PlsY family. In terms of assembly, probably interacts with PlsX.

It localises to the cell membrane. The catalysed reaction is an acyl phosphate + sn-glycerol 3-phosphate = a 1-acyl-sn-glycero-3-phosphate + phosphate. Its pathway is lipid metabolism; phospholipid metabolism. Catalyzes the transfer of an acyl group from acyl-phosphate (acyl-PO(4)) to glycerol-3-phosphate (G3P) to form lysophosphatidic acid (LPA). This enzyme utilizes acyl-phosphate as fatty acyl donor, but not acyl-CoA or acyl-ACP. The chain is Glycerol-3-phosphate acyltransferase 2 from Deinococcus radiodurans (strain ATCC 13939 / DSM 20539 / JCM 16871 / CCUG 27074 / LMG 4051 / NBRC 15346 / NCIMB 9279 / VKM B-1422 / R1).